The primary structure comprises 240 residues: UDP-2,3-diacylglucosamine hydrolase (240 aa).

Residues Asp-8, His-10, Asp-41, Asn-79, and His-114 each contribute to the Mn(2+) site. Position 79–80 (79–80 (NR)) interacts with substrate. Asp-122, Ser-160, Asn-164, Lys-167, and His-195 together coordinate substrate. Residues His-195 and His-197 each coordinate Mn(2+).

Belongs to the LpxH family. It depends on Mn(2+) as a cofactor.

The protein resides in the cell inner membrane. The catalysed reaction is UDP-2-N,3-O-bis[(3R)-3-hydroxytetradecanoyl]-alpha-D-glucosamine + H2O = 2-N,3-O-bis[(3R)-3-hydroxytetradecanoyl]-alpha-D-glucosaminyl 1-phosphate + UMP + 2 H(+). The protein operates within glycolipid biosynthesis; lipid IV(A) biosynthesis; lipid IV(A) from (3R)-3-hydroxytetradecanoyl-[acyl-carrier-protein] and UDP-N-acetyl-alpha-D-glucosamine: step 4/6. Hydrolyzes the pyrophosphate bond of UDP-2,3-diacylglucosamine to yield 2,3-diacylglucosamine 1-phosphate (lipid X) and UMP by catalyzing the attack of water at the alpha-P atom. Involved in the biosynthesis of lipid A, a phosphorylated glycolipid that anchors the lipopolysaccharide to the outer membrane of the cell. This Proteus mirabilis (strain HI4320) protein is UDP-2,3-diacylglucosamine hydrolase.